The chain runs to 1267 residues: RNA-directed RNA polymerase lambda-3 (1267 aa).

The region spanning 555–792 (LSPTSGSAVI…KLYFIFGCRI (238 aa)) is the RdRp catalytic domain.

It belongs to the reoviridae RNA-directed RNA polymerase family.

The protein resides in the virion. The catalysed reaction is RNA(n) + a ribonucleoside 5'-triphosphate = RNA(n+1) + diphosphate. In terms of biological role, RNA-directed RNA polymerase that is involved in transcription and genome replication. Following infection, it catalyzes the synthesis of fully conservative plus strands. After core assembly, which consists in recruitment of one capped plus-strand for each genomic segments and polymerase complexes, the polymerase switches mode and catalyzes the synthesis of complementary minus-strands. The protein is RNA-directed RNA polymerase lambda-3 (L1) of Reovirus type 3 (strain Dearing) (T3D).